A 130-amino-acid polypeptide reads, in one-letter code: Small ribosomal subunit protein uS8 (130 aa).

The protein belongs to the universal ribosomal protein uS8 family. Part of the 30S ribosomal subunit. Contacts proteins S5 and S12.

Functionally, one of the primary rRNA binding proteins, it binds directly to 16S rRNA central domain where it helps coordinate assembly of the platform of the 30S subunit. The protein is Small ribosomal subunit protein uS8 of Pseudomonas fluorescens (strain ATCC BAA-477 / NRRL B-23932 / Pf-5).